Reading from the N-terminus, the 123-residue chain is Protein Wnt-3a (123 aa).

S1 is lipidated: O-palmitoleoyl serine. Cysteines 89 and 104 form a disulfide. N90 carries an N-linked (GlcNAc...) asparagine glycan.

Belongs to the Wnt family. Disulfide bonds have critical and distinct roles in secretion and activity. Loss of each conserved cysteine results in high molecular weight oxidized Wnt oligomers, which are formed through inter-Wnt disulfide bonding. Post-translationally, palmitoleoylation is required for efficient binding to frizzled receptors. Depalmitoleoylation leads to Wnt signaling pathway inhibition.

It localises to the secreted. It is found in the extracellular space. The protein resides in the extracellular matrix. Ligand for members of the frizzled family of seven transmembrane receptors. Functions in the canonical Wnt signaling pathway that results in activation of transcription factors of the TCF/LEF family. Required for normal embryonic mesoderm development and formation of caudal somites. Required for normal morphogenesis of the developing neural tube. This is Protein Wnt-3a (WNT-3A) from Plethodon jordani (Red-cheeked salamander).